The chain runs to 200 residues: Prophage tail fiber assembly protein homolog TfaE (200 aa).

It belongs to the tfa family.

This is Prophage tail fiber assembly protein homolog TfaE (tfaE) from Escherichia coli (strain K12).